Consider the following 130-residue polypeptide: Small ribosomal subunit protein uS11 (130 aa).

Belongs to the universal ribosomal protein uS11 family. In terms of assembly, part of the 30S ribosomal subunit. Interacts with proteins S7 and S18. Binds to IF-3.

Its function is as follows. Located on the platform of the 30S subunit, it bridges several disparate RNA helices of the 16S rRNA. Forms part of the Shine-Dalgarno cleft in the 70S ribosome. This Syntrophobacter fumaroxidans (strain DSM 10017 / MPOB) protein is Small ribosomal subunit protein uS11.